A 354-amino-acid polypeptide reads, in one-letter code: Ion-translocating oxidoreductase complex subunit D (354 aa).

5 consecutive transmembrane segments (helical) span residues 19–39 (IMLW…YYFG), 40–60 (FGVL…EFLV), 70–89 (FYIS…VAIP), 94–116 (YWII…GGLG), and 123–143 (AMVG…TWLA). T186 carries the post-translational modification FMN phosphoryl threonine. The next 5 helical transmembrane spans lie at 215–235 (LAGL…LFLV), 242–262 (WQIP…SWLF), 266–286 (MPSP…FFIA), 300–320 (LVFG…GGYP), and 321–341 (DGAA…DQYT).

This sequence belongs to the NqrB/RnfD family. In terms of assembly, the complex is composed of six subunits: RnfA, RnfB, RnfC, RnfD, RnfE and RnfG. The cofactor is FMN.

The protein localises to the cell inner membrane. Part of a membrane-bound complex that couples electron transfer with translocation of ions across the membrane. This is Ion-translocating oxidoreductase complex subunit D from Mannheimia succiniciproducens (strain KCTC 0769BP / MBEL55E).